The following is a 400-amino-acid chain: Laminin subunit B (400 aa).

Laminin EGF-like domains lie at 1–5 (EGCKP), 6–53 (CECD…GCKS), and 54–100 (CTCN…QCIP). Disulfide bonds link C6–C18, C8–C25, C27–C36, C39–C51, C54–C66, C56–C73, C75–C84, and C87–C98. The segment at 101 to 400 (CGECFDNWDK…AEAKNNAHEA (300 aa)) is domain II and I. Residues 140-235 (KEFEELEQVL…RENALEIQEQ (96 aa)) adopt a coiled-coil conformation. N-linked (GlcNAc...) asparagine glycans are attached at residues N160, N175, N216, N266, N283, N310, and N356. Positions 353–400 (EAKNTSRKAEELIKSKYRSTSSTLSELENSNKQCKQATAEAKNNAHEA) form a coiled coil. Positions 369 to 400 (YRSTSSTLSELENSNKQCKQATAEAKNNAHEA) are disordered. Over residues 371 to 383 (STSSTLSELENSN) the composition is skewed to low complexity.

As to quaternary structure, laminin is a complex glycoprotein, consisting of three different polypeptide chains (alpha, beta, gamma), which are bound to each other by disulfide bonds into a cross-shaped molecule comprising one long and three short arms with globules at each end. In terms of tissue distribution, individual glial and muscle cells.

It localises to the secreted. It is found in the extracellular space. The protein resides in the extracellular matrix. Its function is as follows. Binding to cells via a high affinity receptor, laminin is thought to mediate the attachment, migration and organization of cells into tissues during embryonic development by interacting with other extracellular matrix components. The sequence is that of Laminin subunit B from Hirudo medicinalis (Medicinal leech).